A 226-amino-acid polypeptide reads, in one-letter code: ATP-dependent dethiobiotin synthetase BioD (226 aa).

14–19 (GIGKTF) serves as a coordination point for ATP. Residue T18 coordinates Mg(2+). Residue K39 is part of the active site. Residue S43 participates in substrate binding. ATP contacts are provided by residues D56, 117–120 (EGVG), 177–178 (NT), 206–208 (PHI), and N213. Mg(2+)-binding residues include D56 and E117.

The protein belongs to the dethiobiotin synthetase family. As to quaternary structure, homodimer. It depends on Mg(2+) as a cofactor.

The protein resides in the cytoplasm. The enzyme catalyses (7R,8S)-7,8-diammoniononanoate + CO2 + ATP = (4R,5S)-dethiobiotin + ADP + phosphate + 3 H(+). It participates in cofactor biosynthesis; biotin biosynthesis; biotin from 7,8-diaminononanoate: step 1/2. Its function is as follows. Catalyzes a mechanistically unusual reaction, the ATP-dependent insertion of CO2 between the N7 and N8 nitrogen atoms of 7,8-diaminopelargonic acid (DAPA, also called 7,8-diammoniononanoate) to form a ureido ring. The sequence is that of ATP-dependent dethiobiotin synthetase BioD from Xylella fastidiosa (strain M12).